The primary structure comprises 105 residues: N(4)-acetylcytidine amidohydrolase (105 aa).

An ASCH domain is found at 7-93 (TFFERFEHDI…VIAEIYPGLE (87 aa)). Residue Lys-21 is the Proton acceptor of the active site. Thr-24 acts as the Nucleophile in catalysis. Glu-74 serves as the catalytic Proton donor.

Belongs to the N(4)-acetylcytidine amidohydrolase family.

It carries out the reaction N(4)-acetylcytidine + H2O = cytidine + acetate + H(+). The enzyme catalyses N(4)-acetyl-2'-deoxycytidine + H2O = 2'-deoxycytidine + acetate + H(+). The catalysed reaction is N(4)-acetylcytosine + H2O = cytosine + acetate + H(+). Its function is as follows. Catalyzes the hydrolysis of N(4)-acetylcytidine (ac4C). This is N(4)-acetylcytidine amidohydrolase from Shewanella baltica (strain OS155 / ATCC BAA-1091).